The following is a 430-amino-acid chain: Glutamate-1-semialdehyde 2,1-aminomutase (430 aa).

The residue at position 265 (K265) is an N6-(pyridoxal phosphate)lysine.

This sequence belongs to the class-III pyridoxal-phosphate-dependent aminotransferase family. HemL subfamily. In terms of assembly, homodimer. The cofactor is pyridoxal 5'-phosphate.

The protein resides in the cytoplasm. It carries out the reaction (S)-4-amino-5-oxopentanoate = 5-aminolevulinate. Its pathway is porphyrin-containing compound metabolism; protoporphyrin-IX biosynthesis; 5-aminolevulinate from L-glutamyl-tRNA(Glu): step 2/2. This chain is Glutamate-1-semialdehyde 2,1-aminomutase, found in Shewanella sp. (strain MR-4).